A 550-amino-acid chain; its full sequence is Medium/long-chain-fatty-acid--CoA/3-oxocholest-4-en-26-oate--CoA ligase (550 aa).

ATP contacts are provided by residues 178–186 (TGGTTGFPK), aspartate 419, arginine 434, and lysine 525. Positions 525–550 (KPDYRWAKEQTEARPADDVHAAHVSA) are disordered.

The protein belongs to the ATP-dependent AMP-binding enzyme family.

It carries out the reaction a medium-chain fatty acid + ATP + CoA = a medium-chain fatty acyl-CoA + AMP + diphosphate. The enzyme catalyses a long-chain fatty acid + ATP + CoA = a long-chain fatty acyl-CoA + AMP + diphosphate. It catalyses the reaction (25S)-3-oxocholest-4-en-26-oate + ATP + CoA = (25S)-3-oxocholest-4-en-26-oyl-CoA + AMP + diphosphate. It participates in lipid metabolism; fatty acid biosynthesis. It functions in the pathway steroid metabolism; cholesterol metabolism. In terms of biological role, catalyzes the activation of medium/long-chain fatty acids as acyl-coenzyme A (acyl-CoA), which are then transferred to the multifunctional polyketide synthase (PKS) type III for further chain extension. Also involved in the degradation of cholesterol via the degradation of the side chains of C-24 branched-chain sterols. Catalyzes the ATP-dependent CoA thioesterification of the sterol 3-oxocholest-4-en-26-oate to yield 3-oxocholest-4-en-26-oyl-CoA. This Mycobacterium marinum (strain ATCC BAA-535 / M) protein is Medium/long-chain-fatty-acid--CoA/3-oxocholest-4-en-26-oate--CoA ligase.